The primary structure comprises 535 residues: CTP synthase (535 aa).

Positions 1–267 (MTKYIFVTGG…DQIVLDHFGV (267 aa)) are amidoligase domain. Ser13 provides a ligand contact to CTP. Ser13 lines the UTP pocket. An ATP-binding site is contributed by 14–19 (SLGKGI). Tyr54 lines the L-glutamine pocket. Asp71 contributes to the ATP binding site. Mg(2+) contacts are provided by Asp71 and Glu141. CTP contacts are provided by residues 148–150 (DIE), 188–193 (KTKPTQ), and Lys224. UTP-binding positions include 188–193 (KTKPTQ) and Lys224. The region spanning 292 to 535 (KIALVGKYVA…VAAASREVKD (244 aa)) is the Glutamine amidotransferase type-1 domain. Residue Gly354 participates in L-glutamine binding. Residue Cys381 is the Nucleophile; for glutamine hydrolysis of the active site. L-glutamine-binding positions include 382 to 385 (LGMQ), Glu405, and Arg463. Residues His508 and Glu510 contribute to the active site.

Belongs to the CTP synthase family. As to quaternary structure, homotetramer.

The enzyme catalyses UTP + L-glutamine + ATP + H2O = CTP + L-glutamate + ADP + phosphate + 2 H(+). It carries out the reaction L-glutamine + H2O = L-glutamate + NH4(+). It catalyses the reaction UTP + NH4(+) + ATP = CTP + ADP + phosphate + 2 H(+). It participates in pyrimidine metabolism; CTP biosynthesis via de novo pathway; CTP from UDP: step 2/2. Its activity is regulated as follows. Allosterically activated by GTP, when glutamine is the substrate; GTP has no effect on the reaction when ammonia is the substrate. The allosteric effector GTP functions by stabilizing the protein conformation that binds the tetrahedral intermediate(s) formed during glutamine hydrolysis. Inhibited by the product CTP, via allosteric rather than competitive inhibition. Catalyzes the ATP-dependent amination of UTP to CTP with either L-glutamine or ammonia as the source of nitrogen. Regulates intracellular CTP levels through interactions with the four ribonucleotide triphosphates. The protein is CTP synthase of Levilactobacillus brevis (strain ATCC 367 / BCRC 12310 / CIP 105137 / JCM 1170 / LMG 11437 / NCIMB 947 / NCTC 947) (Lactobacillus brevis).